A 158-amino-acid polypeptide reads, in one-letter code: NADH-quinone oxidoreductase subunit B (158 aa).

The [4Fe-4S] cluster site is built by C37, C38, C102, and C132.

This sequence belongs to the complex I 20 kDa subunit family. As to quaternary structure, NDH-1 is composed of 14 different subunits. Subunits NuoB, C, D, E, F, and G constitute the peripheral sector of the complex. [4Fe-4S] cluster serves as cofactor.

Its subcellular location is the cell inner membrane. It catalyses the reaction a quinone + NADH + 5 H(+)(in) = a quinol + NAD(+) + 4 H(+)(out). NDH-1 shuttles electrons from NADH, via FMN and iron-sulfur (Fe-S) centers, to quinones in the respiratory chain. Couples the redox reaction to proton translocation (for every two electrons transferred, four hydrogen ions are translocated across the cytoplasmic membrane), and thus conserves the redox energy in a proton gradient. This chain is NADH-quinone oxidoreductase subunit B, found in Hydrogenovibrio crunogenus (strain DSM 25203 / XCL-2) (Thiomicrospira crunogena).